Reading from the N-terminus, the 203-residue chain is Secreted phosphoprotein 24 (203 aa).

An N-terminal signal peptide occupies residues 1–23; sequence MEQAMLKTLALLVLGMHYWCATG. Cystine bridges form between Cys-86/Cys-96 and Cys-109/Cys-127. Ser-90 is subject to Phosphoserine. Phosphoserine occurs at positions 137, 138, 162, 165, and 174.

Belongs to the SPP2 family. Post-translationally, phosphorylation sites are present in the extracellular medium.

The protein localises to the secreted. Its function is as follows. Could coordinate an aspect of bone turnover. This Mus musculus (Mouse) protein is Secreted phosphoprotein 24 (Spp2).